Reading from the N-terminus, the 20-residue chain is Fibrinogen beta chain (20 aa).

The disordered stretch occupies residues 1-20 (ATDYEDEEFPGAVPPSVGAR). Residue Thr-2 is glycosylated (O-linked (GalNAc...) threonine). Position 4 is a sulfotyrosine (Tyr-4).

As to quaternary structure, heterohexamer; disulfide linked. Contains 2 sets of 3 non-identical chains (alpha, beta and gamma). The 2 heterotrimers are in head to head conformation with the N-termini in a small central domain. Conversion of fibrinogen to fibrin is triggered by thrombin, which cleaves fibrinopeptides A and B from alpha and beta chains, and thus exposes the N-terminal polymerization sites responsible for the formation of the soft clot.

It localises to the secreted. Cleaved by the protease thrombin to yield monomers which, together with fibrinogen alpha (FGA) and fibrinogen gamma (FGG), polymerize to form an insoluble fibrin matrix. Fibrin has a major function in hemostasis as one of the primary components of blood clots. In addition, functions during the early stages of wound repair to stabilize the lesion and guide cell migration during re-epithelialization. Was originally thought to be essential for platelet aggregation, based on in vitro studies using anticoagulated blood. However subsequent studies have shown that it is not absolutely required for thrombus formation in vivo. Enhances expression of SELP in activated platelets. Maternal fibrinogen is essential for successful pregnancy. Fibrin deposition is also associated with infection, where it protects against IFNG-mediated hemorrhage. May also facilitate the antibacterial immune response via both innate and T-cell mediated pathways. The protein is Fibrinogen beta chain (FGB) of Elephas maximus (Indian elephant).